The primary structure comprises 136 residues: MIIGIGNDTEAISRVAEIVERQKSFITLILTPAERAAAAERKGKHQNEYIAGRFSAKEAFSKATGYGIGEKVQWQDIEILNEPNGRPVMKVKNFPYHTYVAITHSGDQVNTVVVIERLTLLEKMSIKLFPKRGVLS.

Positions 8 and 58 each coordinate Mg(2+).

This sequence belongs to the P-Pant transferase superfamily. AcpS family. Requires Mg(2+) as cofactor.

It is found in the cytoplasm. It carries out the reaction apo-[ACP] + CoA = holo-[ACP] + adenosine 3',5'-bisphosphate + H(+). Functionally, transfers the 4'-phosphopantetheine moiety from coenzyme A to a Ser of acyl-carrier-protein. In Leuconostoc mesenteroides subsp. mesenteroides (strain ATCC 8293 / DSM 20343 / BCRC 11652 / CCM 1803 / JCM 6124 / NCDO 523 / NBRC 100496 / NCIMB 8023 / NCTC 12954 / NRRL B-1118 / 37Y), this protein is Holo-[acyl-carrier-protein] synthase.